Consider the following 396-residue polypeptide: MTGFLTILSLSLAALSVTNAAQILSVPQGAEVVPNGYIVVMKDDTSEQDFSSHRAWVSNIHHNVTRRGLNGEGVKETYDFDNVRGYSGIFDKDTIKDISNDPKVAFVEPDAIIKQHVFVQQRKAPWGLSRLSNRRGGRNYVFDSTAGNGVWAYVVDSGVDIHHSEFQGRAIWGSNLVDNKNSDGTGHGTHVAGTIAGKTYGIAKKAKIIAVKVLDSEGKGPTSGIIAGINWSIKHARQHGKLQKSVLNMSLGGSYSAGLNHVTARAIKAGMFVSVSAGNDNINSNNNSPASERSVCTIAASTENDGKASFSNWGPAVDLYAPGHNILSARPGGGSQTMSGTSMAAPHAAGVAAYLIAKEGIPGDRVCLRLKQLSRPTIRNPGPDTTSRLLYNGSGR.

Residues 1–20 (MTGFLTILSLSLAALSVTNA) form the signal peptide. A propeptide spanning residues 21–116 (AQILSVPQGA…VEPDAIIKQH (96 aa)) is cleaved from the precursor. In terms of domain architecture, Inhibitor I9 spans 37–114 (YIVVMKDDTS…AFVEPDAIIK (78 aa)). The Peptidase S8 domain occupies 125–396 (PWGLSRLSNR…SRLLYNGSGR (272 aa)). Residues aspartate 156 and histidine 187 each act as charge relay system in the active site. 2 N-linked (GlcNAc...) asparagine glycosylation sites follow: asparagine 230 and asparagine 248. Serine 342 serves as the catalytic Charge relay system. Residues 376 to 396 (PTIRNPGPDTTSRLLYNGSGR) are disordered. N-linked (GlcNAc...) asparagine glycosylation is present at asparagine 392.

Belongs to the peptidase S8 family.

It localises to the secreted. In terms of biological role, secreted subtilisin-like serine protease with keratinolytic activity that contributes to pathogenicity. The sequence is that of Subtilisin-like protease 5 (SUB5) from Arthroderma gypseum (strain ATCC MYA-4604 / CBS 118893) (Microsporum gypseum).